Consider the following 350-residue polypeptide: 3-isopropylmalate dehydrogenase (350 aa).

NAD(+) is bound at residue 76-87 (GPKWDNAPKRPE). Positions 94, 104, 132, and 217 each coordinate substrate. Positions 217, 241, and 245 each coordinate Mg(2+). Residue 275 to 287 (GSAPDIANQNIAN) participates in NAD(+) binding.

This sequence belongs to the isocitrate and isopropylmalate dehydrogenases family. LeuB type 1 subfamily. In terms of assembly, homodimer. Mg(2+) serves as cofactor. It depends on Mn(2+) as a cofactor.

It localises to the cytoplasm. It carries out the reaction (2R,3S)-3-isopropylmalate + NAD(+) = 4-methyl-2-oxopentanoate + CO2 + NADH. It participates in amino-acid biosynthesis; L-leucine biosynthesis; L-leucine from 3-methyl-2-oxobutanoate: step 3/4. Its function is as follows. Catalyzes the oxidation of 3-carboxy-2-hydroxy-4-methylpentanoate (3-isopropylmalate) to 3-carboxy-4-methyl-2-oxopentanoate. The product decarboxylates to 4-methyl-2 oxopentanoate. In Listeria monocytogenes serovar 1/2a (strain ATCC BAA-679 / EGD-e), this protein is 3-isopropylmalate dehydrogenase.